A 56-amino-acid polypeptide reads, in one-letter code: Small ribosomal subunit protein bS21 (56 aa).

This sequence belongs to the bacterial ribosomal protein bS21 family.

The protein is Small ribosomal subunit protein bS21 of Synechococcus sp. (strain RCC307).